The chain runs to 166 residues: 2-C-methyl-D-erythritol 2,4-cyclodiphosphate synthase (166 aa).

A divalent metal cation-binding residues include Asp-11 and His-13. Residues 11–13 (DVH) and 40–41 (HS) contribute to the 4-CDP-2-C-methyl-D-erythritol 2-phosphate site. Position 48 (His-48) interacts with a divalent metal cation. Residues 62-64 (DLG), 135-138 (TTSD), Phe-142, and Arg-145 each bind 4-CDP-2-C-methyl-D-erythritol 2-phosphate.

The protein belongs to the IspF family. In terms of assembly, homotrimer. A divalent metal cation serves as cofactor.

The enzyme catalyses 4-CDP-2-C-methyl-D-erythritol 2-phosphate = 2-C-methyl-D-erythritol 2,4-cyclic diphosphate + CMP. The protein operates within isoprenoid biosynthesis; isopentenyl diphosphate biosynthesis via DXP pathway; isopentenyl diphosphate from 1-deoxy-D-xylulose 5-phosphate: step 4/6. Functionally, involved in the biosynthesis of isopentenyl diphosphate (IPP) and dimethylallyl diphosphate (DMAPP), two major building blocks of isoprenoid compounds. Catalyzes the conversion of 4-diphosphocytidyl-2-C-methyl-D-erythritol 2-phosphate (CDP-ME2P) to 2-C-methyl-D-erythritol 2,4-cyclodiphosphate (ME-CPP) with a corresponding release of cytidine 5-monophosphate (CMP). This chain is 2-C-methyl-D-erythritol 2,4-cyclodiphosphate synthase, found in Pseudarthrobacter chlorophenolicus (strain ATCC 700700 / DSM 12829 / CIP 107037 / JCM 12360 / KCTC 9906 / NCIMB 13794 / A6) (Arthrobacter chlorophenolicus).